Consider the following 103-residue polypeptide: Small ribosomal subunit protein bS6c (103 aa).

It belongs to the bacterial ribosomal protein bS6 family.

The protein resides in the plastid. It is found in the chloroplast. Binds together with bS18 to 16S ribosomal RNA. The polypeptide is Small ribosomal subunit protein bS6c (Gracilaria tenuistipitata var. liui (Red alga)).